The sequence spans 440 residues: Phosphoglucosamine mutase (440 aa).

Serine 97 (phosphoserine intermediate) is an active-site residue. Mg(2+) contacts are provided by serine 97, aspartate 237, aspartate 239, and aspartate 241. Serine 97 bears the Phosphoserine mark.

The protein belongs to the phosphohexose mutase family. The cofactor is Mg(2+). In terms of processing, activated by phosphorylation.

It catalyses the reaction alpha-D-glucosamine 1-phosphate = D-glucosamine 6-phosphate. Its function is as follows. Catalyzes the conversion of glucosamine-6-phosphate to glucosamine-1-phosphate. The sequence is that of Phosphoglucosamine mutase from Nautilia profundicola (strain ATCC BAA-1463 / DSM 18972 / AmH).